Here is a 490-residue protein sequence, read N- to C-terminus: Beta-N-acetyl-D-glucosaminide beta-1,4-N-acetylglucosaminyl-transferase (490 aa).

The Cytoplasmic portion of the chain corresponds to 1-30 (MYLVVCWGRVTGNMISTRHCFSRCKSRSVR). A helical; Signal-anchor for type II membrane protein membrane pass occupies residues 31-50 (VIKATAMLFVAAMLFLALHM). Asn-51, Asn-82, Asn-441, Asn-459, and Asn-485 each carry an N-linked (GlcNAc...) asparagine glycan. Over 51-490 (NFSHEASQQN…YLTGNFTIIS (440 aa)) the chain is Lumenal.

Belongs to the glycosyltransferase 7 family.

The protein localises to the golgi apparatus membrane. The catalysed reaction is an N-acetyl-beta-D-glucosaminyl derivative + UDP-N-acetyl-alpha-D-glucosamine = an N-acetyl-beta-D-glucosaminyl-(1-&gt;4)-N-acetyl-beta-D-glucosaminyl derivative + UDP + H(+). The protein operates within protein modification; protein glycosylation. This chain is Beta-N-acetyl-D-glucosaminide beta-1,4-N-acetylglucosaminyl-transferase (GNT), found in Lymnaea stagnalis (Great pond snail).